The primary structure comprises 189 residues: HGPRTase-like protein (189 aa).

It belongs to the purine/pyrimidine phosphoribosyltransferase family. Archaeal HPRT subfamily.

Functionally, may catalyze a purine salvage reaction, the substrate is unknown. This Halorhabdus utahensis (strain DSM 12940 / JCM 11049 / AX-2) protein is HGPRTase-like protein.